The sequence spans 179 residues: NADH dehydrogenase [ubiquinone] 1 beta subcomplex subunit 9 (179 aa).

A2 is modified (N-acetylalanine). Phosphoserine is present on S85. The disordered stretch occupies residues 136 to 162 (EVKQLQEETPPGGPLTEALPPARKEGD).

It belongs to the complex I LYR family. In terms of assembly, mammalian complex I is composed of 45 different subunits.

The protein localises to the mitochondrion inner membrane. In terms of biological role, accessory subunit of the mitochondrial membrane respiratory chain NADH dehydrogenase (Complex I), that is believed to be not involved in catalysis. Complex I functions in the transfer of electrons from NADH to the respiratory chain. The immediate electron acceptor for the enzyme is believed to be ubiquinone. This chain is NADH dehydrogenase [ubiquinone] 1 beta subcomplex subunit 9 (NDUFB9), found in Pan troglodytes (Chimpanzee).